Consider the following 261-residue polypeptide: Chloroplastic import inner membrane translocase subunit HP30-1 (261 aa).

The next 4 membrane-spanning stretches (helical) occupy residues 59–77 (AAVVSTMSGVQGAFIGGLM), 113–129 (NFAAITGVNAGIASVMK), 139–155 (SAVVAALGSGFAYSLVS), and 163–180 (MNAITTAAGFAVFQGVFF).

This sequence belongs to the Tim17/Tim22/Tim23 family. As to quaternary structure, probable component of a protein-conducting channel made of HP30-1, HP30-2 and HP20 that mediates the import of transit sequence-less proteins into the chloroplastic inner membrane. Interacts with CEQORH.

Its subcellular location is the plastid. It localises to the chloroplast inner membrane. Its function is as follows. Together with HP30-2 and HP20, triggers the import and insertion of transit sequence-less multi-pass transmembrane proteins (e.g. CEQORH) into the chloroplastic inner membrane. This chain is Chloroplastic import inner membrane translocase subunit HP30-1, found in Arabidopsis thaliana (Mouse-ear cress).